The chain runs to 298 residues: tRNA dimethylallyltransferase 2 (298 aa).

19–26 contributes to the ATP binding site; that stretch reads GATATGKT. 21–26 is a substrate binding site; that stretch reads TATGKT. Positions 44–47 are interaction with substrate tRNA; that stretch reads DSRQ.

The protein belongs to the IPP transferase family. Monomer. Mg(2+) serves as cofactor.

It carries out the reaction adenosine(37) in tRNA + dimethylallyl diphosphate = N(6)-dimethylallyladenosine(37) in tRNA + diphosphate. In terms of biological role, catalyzes the transfer of a dimethylallyl group onto the adenine at position 37 in tRNAs that read codons beginning with uridine, leading to the formation of N6-(dimethylallyl)adenosine (i(6)A). This Treponema denticola (strain ATCC 35405 / DSM 14222 / CIP 103919 / JCM 8153 / KCTC 15104) protein is tRNA dimethylallyltransferase 2.